We begin with the raw amino-acid sequence, 105 residues long: Nitrogen fixation nifHD region glnB-like protein 1 (105 aa).

The protein belongs to the P(II) protein family.

Could be involved in the regulation of nitrogen fixation. This chain is Nitrogen fixation nifHD region glnB-like protein 1 (glnBI), found in Methanococcus maripaludis (Methanococcus deltae).